The primary structure comprises 234 residues: Phosphoglycolate phosphatase (234 aa).

The active-site Nucleophile is Asp-15. 3 residues coordinate Mg(2+): Asp-15, Asp-17, and Asp-177.

Belongs to the HAD-like hydrolase superfamily. CbbY/CbbZ/Gph/YieH family. In terms of assembly, monomer. Requires Mg(2+) as cofactor. It depends on chloride as a cofactor.

The enzyme catalyses 2-phosphoglycolate + H2O = glycolate + phosphate. It functions in the pathway organic acid metabolism; glycolate biosynthesis; glycolate from 2-phosphoglycolate: step 1/1. Specifically catalyzes the dephosphorylation of 2-phosphoglycolate. Is involved in the dissimilation of the intracellular 2-phosphoglycolate formed during the DNA repair of 3'-phosphoglycolate ends, a major class of DNA lesions induced by oxidative stress. This is Phosphoglycolate phosphatase from Photorhabdus laumondii subsp. laumondii (strain DSM 15139 / CIP 105565 / TT01) (Photorhabdus luminescens subsp. laumondii).